The primary structure comprises 399 residues: Leu/Ile/Val-binding protein homolog 7 (399 aa).

The first 22 residues, 1–22 (MEKHLIALSVAALLAGAAPASA), serve as a signal peptide directing secretion.

This sequence belongs to the leucine-binding protein family.

Component of an amino-acid transport system. This Brucella melitensis biotype 1 (strain ATCC 23456 / CCUG 17765 / NCTC 10094 / 16M) protein is Leu/Ile/Val-binding protein homolog 7.